The sequence spans 235 residues: MGRAFEYRRASKEARWDKMSKLFPKLAKAIQVAAKEGGIDPDMNPKLRSAIATAKANNMPKDNIDAAIKRASGKDSADIKNIHYEGKAAHGALVIVECMSDNPTRTVANVKAIFSKNGGEVLQNGSLGFMFTRKAVFHLEKFAGDLEELELDLIDAGFEELEQNEEELVISGDYTAFGELSSAIEAKGLVLKKAGLEYIPNNPVSFSKEQLSDIEKLLDKLEDDDDVQAVYTNID.

It belongs to the TACO1 family.

It localises to the cytoplasm. The chain is Probable transcriptional regulatory protein JJD26997_0557 from Campylobacter jejuni subsp. doylei (strain ATCC BAA-1458 / RM4099 / 269.97).